Reading from the N-terminus, the 145-residue chain is Large ribosomal subunit protein uL14m (145 aa).

Residues 1 to 30 (MAALTGLWGSFAHVSRAFSQRCFSTSGSLS) constitute a mitochondrion transit peptide.

This sequence belongs to the universal ribosomal protein uL14 family. Component of the mitochondrial ribosome large subunit (39S) which comprises a 16S rRNA and about 50 distinct proteins. Interacts with MALSU1.

The protein resides in the mitochondrion. May form part of 2 intersubunit bridges in the assembled ribosome. Upon binding to MALSU1, intersubunit bridge formation is blocked, preventing ribosome formation and repressing translation. The chain is Large ribosomal subunit protein uL14m (Mrpl14) from Mus musculus (Mouse).